A 548-amino-acid polypeptide reads, in one-letter code: Glucose-6-phosphate isomerase 1 (548 aa).

Glutamate 353 acts as the Proton donor in catalysis. Residues histidine 384 and lysine 495 contribute to the active site.

The protein belongs to the GPI family.

The protein localises to the cytoplasm. The enzyme catalyses alpha-D-glucose 6-phosphate = beta-D-fructose 6-phosphate. The protein operates within carbohydrate biosynthesis; gluconeogenesis. It functions in the pathway carbohydrate degradation; glycolysis; D-glyceraldehyde 3-phosphate and glycerone phosphate from D-glucose: step 2/4. Its function is as follows. Catalyzes the reversible isomerization of glucose-6-phosphate to fructose-6-phosphate. The protein is Glucose-6-phosphate isomerase 1 of Chromohalobacter salexigens (strain ATCC BAA-138 / DSM 3043 / CIP 106854 / NCIMB 13768 / 1H11).